The chain runs to 549 residues: Glucose-6-phosphate isomerase (549 aa).

The active-site Proton donor is Glu355. Residues His386 and Lys514 contribute to the active site.

This sequence belongs to the GPI family.

Its subcellular location is the cytoplasm. The enzyme catalyses alpha-D-glucose 6-phosphate = beta-D-fructose 6-phosphate. Its pathway is carbohydrate biosynthesis; gluconeogenesis. It functions in the pathway carbohydrate degradation; glycolysis; D-glyceraldehyde 3-phosphate and glycerone phosphate from D-glucose: step 2/4. Functionally, catalyzes the reversible isomerization of glucose-6-phosphate to fructose-6-phosphate. This Buchnera aphidicola subsp. Acyrthosiphon pisum (strain 5A) protein is Glucose-6-phosphate isomerase.